Reading from the N-terminus, the 348-residue chain is Selenide, water dikinase (348 aa).

C17 is an active-site residue. Residues K20 and 47-49 (THD) each bind ATP. Residue D50 coordinates Mg(2+). Residues D67, D90, and 138–140 (GHT) contribute to the ATP site. Mg(2+) is bound at residue D90. Mg(2+) is bound at residue D226.

It belongs to the selenophosphate synthase 1 family. Class I subfamily. In terms of assembly, homodimer. Requires Mg(2+) as cofactor.

The catalysed reaction is hydrogenselenide + ATP + H2O = selenophosphate + AMP + phosphate + 2 H(+). In terms of biological role, synthesizes selenophosphate from selenide and ATP. The sequence is that of Selenide, water dikinase from Porphyromonas gingivalis (strain ATCC 33277 / DSM 20709 / CIP 103683 / JCM 12257 / NCTC 11834 / 2561).